We begin with the raw amino-acid sequence, 186 residues long: Protein MTH_152 (186 aa).

It belongs to the flavoredoxin family. Homodimer. The cofactor is FMN.

In Methanothermobacter thermautotrophicus (strain ATCC 29096 / DSM 1053 / JCM 10044 / NBRC 100330 / Delta H) (Methanobacterium thermoautotrophicum), this protein is Protein MTH_152.